The primary structure comprises 355 residues: 3'-5' exonuclease (355 aa).

The tract at residues 1-121 is disordered; that stretch reads MDKYLIKLPN…PSPEKEKPEK (121 aa). Composition is skewed to basic and acidic residues over residues 17–29, 36–50, and 72–92; these read VSDK…KETP, AKKD…KENT, and KNLD…ENPP. A phosphoserine mark is found at serine 105 and serine 113. The 3'-5' exonuclease domain maps to 147–315; the sequence is VMQWVEKQKE…GQVIYRDLEQ (169 aa). Residues aspartate 164, glutamate 166, and aspartate 302 each contribute to the Mg(2+) site.

This sequence belongs to the WRNexo family.

It is found in the nucleus. Has exonuclease activity on both single-stranded and duplex templates bearing overhangs, but not blunt ended duplex DNA, and cleaves in a 3'-5' direction. Essential for the formation of DNA replication focal centers. Has an important role in maintaining genome stability. The protein is 3'-5' exonuclease of Drosophila ananassae (Fruit fly).